Reading from the N-terminus, the 369-residue chain is Phosphate acyltransferase (369 aa).

The disordered stretch occupies residues 342–369 (ASRAPNSQTAGGERAAAVPQSAQLRMDS).

The protein belongs to the PlsX family. In terms of assembly, homodimer. Probably interacts with PlsY.

It is found in the cytoplasm. The catalysed reaction is a fatty acyl-[ACP] + phosphate = an acyl phosphate + holo-[ACP]. Its pathway is lipid metabolism; phospholipid metabolism. In terms of biological role, catalyzes the reversible formation of acyl-phosphate (acyl-PO(4)) from acyl-[acyl-carrier-protein] (acyl-ACP). This enzyme utilizes acyl-ACP as fatty acyl donor, but not acyl-CoA. The protein is Phosphate acyltransferase of Methylocella silvestris (strain DSM 15510 / CIP 108128 / LMG 27833 / NCIMB 13906 / BL2).